The following is a 373-amino-acid chain: Probable cysteine protease RD19C (373 aa).

An N-terminal signal peptide occupies residues 1–20 (MDRVVFFFLIAATLLAGSLG). Residues 21–139 (STVISGEVTD…QTAPILPTSD (119 aa)) constitute a propeptide, activation peptide. Cystine bridges form between C161/C211 and C195/C245. Residue C164 is part of the active site. N258 is a glycosylation site (N-linked (GlcNAc...) asparagine). C301 and C356 are joined by a disulfide. Active-site residues include H307 and N334.

This sequence belongs to the peptidase C1 family.

It localises to the lytic vacuole. Functionally, probable thiol protease. The chain is Probable cysteine protease RD19C from Arabidopsis thaliana (Mouse-ear cress).